The chain runs to 156 residues: SsrA-binding protein (156 aa).

This sequence belongs to the SmpB family.

The protein localises to the cytoplasm. In terms of biological role, required for rescue of stalled ribosomes mediated by trans-translation. Binds to transfer-messenger RNA (tmRNA), required for stable association of tmRNA with ribosomes. tmRNA and SmpB together mimic tRNA shape, replacing the anticodon stem-loop with SmpB. tmRNA is encoded by the ssrA gene; the 2 termini fold to resemble tRNA(Ala) and it encodes a 'tag peptide', a short internal open reading frame. During trans-translation Ala-aminoacylated tmRNA acts like a tRNA, entering the A-site of stalled ribosomes, displacing the stalled mRNA. The ribosome then switches to translate the ORF on the tmRNA; the nascent peptide is terminated with the 'tag peptide' encoded by the tmRNA and targeted for degradation. The ribosome is freed to recommence translation, which seems to be the essential function of trans-translation. The sequence is that of SsrA-binding protein from Trichodesmium erythraeum (strain IMS101).